The chain runs to 371 residues: Cytochrome b (371 aa).

The next 4 membrane-spanning stretches (helical) occupy residues 25–45 (FGSM…FLAV), 69–90 (WMMQ…YIHI), 105–125 (WLSG…GYVL), and 170–190 (FFAL…LHIM). 2 residues coordinate heme b: His-75 and His-89. The heme b site is built by His-174 and His-188. His-193 lines the a ubiquinone pocket. The next 4 helical transmembrane spans lie at 218-238 (YKDL…VSFL), 280-300 (LGGA…PFTH), 312-332 (IMQL…WAAT), and 339-358 (FTMI…IMNP).

The protein belongs to the cytochrome b family. The cytochrome bc1 complex contains 3 respiratory subunits (MT-CYB, CYC1 and UQCRFS1), 2 core proteins (UQCRC1 and UQCRC2) and probably 6 low-molecular weight proteins. Requires heme b as cofactor.

The protein resides in the mitochondrion inner membrane. Functionally, component of the ubiquinol-cytochrome c reductase complex (complex III or cytochrome b-c1 complex) that is part of the mitochondrial respiratory chain. The b-c1 complex mediates electron transfer from ubiquinol to cytochrome c. Contributes to the generation of a proton gradient across the mitochondrial membrane that is then used for ATP synthesis. This chain is Cytochrome b (MT-CYB), found in Eryx miliaris (Desert sand boa).